Here is a 293-residue protein sequence, read N- to C-terminus: Protein BOBBER 2 (293 aa).

Alanine 2 carries the N-acetylalanine modification. The stretch at 50-80 (EKEIVAAVMAAKQRLREAEKKKLEKESVKSM) forms a coiled coil. Composition is skewed to basic and acidic residues over residues 67-102 (AEKK…KEES) and 110-120 (EIEKPKEEKES). Residues 67–125 (AEKKKLEKESVKSMEVEKPKKDSLKPTELEKPKEESLMATDPMEIEKPKEEKESGPIVP) form a disordered region. The 90-residue stretch at 131-220 (LDFEKYSWGQ…DQMEWWKYCV (90 aa)) folds into the CS domain.

The protein localises to the cytoplasm. Its subcellular location is the cytoplasmic granule. Functionally, small heat shock protein required for the establishment of auxin gradients and for patterning of the apical domain of the embryo. Involved in the specification of the cotyledon primordia. Also required for normal inflorescence and floral meristem function, normal developmental patterning and thermotolerance. Acts as a molecular chaperone. This Arabidopsis thaliana (Mouse-ear cress) protein is Protein BOBBER 2 (BOB2).